A 274-amino-acid chain; its full sequence is MAIKIYRPTSPGRRHHSVSSFEEITKSRPERALLVSVKNDSGRNNQGRVTVRHRGGGSKTQIRVIDFKRNKLDVPGRVAAIEYDPNRTARIALVFYTDGEKRYILAPSDLKVGDVIMAGENAEPKSGNALPLSSIPTGTFIHNIEIIKGKGGIMVRSAGAAAQLMAKEDDYALVRLPSGEMRKVRSDCSATVGQIGNIEHGTLEIGKAGRNRHLGWRPTVRGSAMSPNNHPHGGGECRCPIGMTGPKTPWGKPALGYRTRKAKYSDKLIVKRRG.

The disordered stretch occupies residues Met-1–Glu-23.

It belongs to the universal ribosomal protein uL2 family. As to quaternary structure, part of the 50S ribosomal subunit. Forms a bridge to the 30S subunit in the 70S ribosome.

Its function is as follows. One of the primary rRNA binding proteins. Required for association of the 30S and 50S subunits to form the 70S ribosome, for tRNA binding and peptide bond formation. It has been suggested to have peptidyltransferase activity; this is somewhat controversial. Makes several contacts with the 16S rRNA in the 70S ribosome. The polypeptide is Large ribosomal subunit protein uL2 (Dehalococcoides mccartyi (strain ATCC BAA-2100 / JCM 16839 / KCTC 5957 / BAV1)).